The chain runs to 169 residues: NAD(P)H-quinone oxidoreductase subunit J, chloroplastic (169 aa).

This sequence belongs to the complex I 30 kDa subunit family. In terms of assembly, NDH is composed of at least 16 different subunits, 5 of which are encoded in the nucleus.

It is found in the plastid. Its subcellular location is the chloroplast thylakoid membrane. It carries out the reaction a plastoquinone + NADH + (n+1) H(+)(in) = a plastoquinol + NAD(+) + n H(+)(out). It catalyses the reaction a plastoquinone + NADPH + (n+1) H(+)(in) = a plastoquinol + NADP(+) + n H(+)(out). In terms of biological role, NDH shuttles electrons from NAD(P)H:plastoquinone, via FMN and iron-sulfur (Fe-S) centers, to quinones in the photosynthetic chain and possibly in a chloroplast respiratory chain. The immediate electron acceptor for the enzyme in this species is believed to be plastoquinone. Couples the redox reaction to proton translocation, and thus conserves the redox energy in a proton gradient. The polypeptide is NAD(P)H-quinone oxidoreductase subunit J, chloroplastic (Marchantia polymorpha (Common liverwort)).